We begin with the raw amino-acid sequence, 652 residues long: Phosphomethylpyrimidine synthase (652 aa).

Residues Asn257, Met286, Tyr315, His351, 371–373 (SRG), 412–415 (DGLR), and Glu451 each bind substrate. Residue His455 coordinates Zn(2+). Tyr478 provides a ligand contact to substrate. Residue His519 coordinates Zn(2+). Residues Cys599, Cys602, and Cys607 each contribute to the [4Fe-4S] cluster site.

The protein belongs to the ThiC family. As to quaternary structure, homodimer. The cofactor is [4Fe-4S] cluster.

It carries out the reaction 5-amino-1-(5-phospho-beta-D-ribosyl)imidazole + S-adenosyl-L-methionine = 4-amino-2-methyl-5-(phosphooxymethyl)pyrimidine + CO + 5'-deoxyadenosine + formate + L-methionine + 3 H(+). Its pathway is cofactor biosynthesis; thiamine diphosphate biosynthesis. Catalyzes the synthesis of the hydroxymethylpyrimidine phosphate (HMP-P) moiety of thiamine from aminoimidazole ribotide (AIR) in a radical S-adenosyl-L-methionine (SAM)-dependent reaction. The chain is Phosphomethylpyrimidine synthase from Thiobacillus denitrificans (strain ATCC 25259 / T1).